A 284-amino-acid polypeptide reads, in one-letter code: Bifunctional protein FolD (284 aa).

NADP(+)-binding positions include 166–168, Ser-191, and Ile-232; that span reads GAS.

The protein belongs to the tetrahydrofolate dehydrogenase/cyclohydrolase family. Homodimer.

It catalyses the reaction (6R)-5,10-methylene-5,6,7,8-tetrahydrofolate + NADP(+) = (6R)-5,10-methenyltetrahydrofolate + NADPH. The catalysed reaction is (6R)-5,10-methenyltetrahydrofolate + H2O = (6R)-10-formyltetrahydrofolate + H(+). Its pathway is one-carbon metabolism; tetrahydrofolate interconversion. Functionally, catalyzes the oxidation of 5,10-methylenetetrahydrofolate to 5,10-methenyltetrahydrofolate and then the hydrolysis of 5,10-methenyltetrahydrofolate to 10-formyltetrahydrofolate. The sequence is that of Bifunctional protein FolD from Neisseria meningitidis serogroup B (strain ATCC BAA-335 / MC58).